The chain runs to 80 residues: Exodeoxyribonuclease 7 small subunit (80 aa).

It belongs to the XseB family. In terms of assembly, heterooligomer composed of large and small subunits.

It is found in the cytoplasm. It carries out the reaction Exonucleolytic cleavage in either 5'- to 3'- or 3'- to 5'-direction to yield nucleoside 5'-phosphates.. Functionally, bidirectionally degrades single-stranded DNA into large acid-insoluble oligonucleotides, which are then degraded further into small acid-soluble oligonucleotides. In Pseudomonas putida (strain W619), this protein is Exodeoxyribonuclease 7 small subunit.